Consider the following 320-residue polypeptide: Glycerol-3-phosphate dehydrogenase [NAD(P)+] (320 aa).

Residues F11, R30, and K102 each contribute to the NADPH site. Sn-glycerol 3-phosphate-binding residues include K102, G130, and S132. A134 serves as a coordination point for NADPH. Sn-glycerol 3-phosphate contacts are provided by K185, D238, S248, R249, and N250. The active-site Proton acceptor is the K185. R249 serves as a coordination point for NADPH. E270 contributes to the NADPH binding site.

Belongs to the NAD-dependent glycerol-3-phosphate dehydrogenase family.

The protein resides in the cytoplasm. It carries out the reaction sn-glycerol 3-phosphate + NAD(+) = dihydroxyacetone phosphate + NADH + H(+). The catalysed reaction is sn-glycerol 3-phosphate + NADP(+) = dihydroxyacetone phosphate + NADPH + H(+). It participates in membrane lipid metabolism; glycerophospholipid metabolism. Functionally, catalyzes the reduction of the glycolytic intermediate dihydroxyacetone phosphate (DHAP) to sn-glycerol 3-phosphate (G3P), the key precursor for phospholipid synthesis. This is Glycerol-3-phosphate dehydrogenase [NAD(P)+] from Roseobacter denitrificans (strain ATCC 33942 / OCh 114) (Erythrobacter sp. (strain OCh 114)).